Here is a 525-residue protein sequence, read N- to C-terminus: Chromaffin granule amine transporter (525 aa).

Over methionine 1 to glutamine 21 the chain is Cytoplasmic. Residues leucine 22–valine 42 traverse the membrane as a helical segment. Residues proline 43 to arginine 138 are Lumenal, vesicle-facing. N-linked (GlcNAc...) asparagine glycosylation is found at asparagine 58, asparagine 87, and asparagine 104. Residues valine 139 to glycine 158 form a helical membrane-spanning segment. Topologically, residues proline 159–histidine 167 are cytoplasmic. The chain crosses the membrane as a helical span at residues isoleucine 168–glycine 188. The Lumenal, vesicle portion of the chain corresponds to threonine 189–arginine 197. The chain crosses the membrane as a helical span at residues threonine 198 to valine 218. The Cytoplasmic segment spans residues tyrosine 219–arginine 227. The chain crosses the membrane as a helical span at residues alanine 228–methionine 250. At tyrosine 251–lysine 256 the chain is on the lumenal, vesicle side. The helical transmembrane segment at serine 257–glutamine 279 threads the bilayer. Topologically, residues proline 280–aspartate 299 are cytoplasmic. Residues proline 300–leucine 319 traverse the membrane as a helical segment. At glutamate 320–lysine 335 the chain is on the lumenal, vesicle side. Residues tryptophan 336–alanine 360 form a helical membrane-spanning segment. The Cytoplasmic segment spans residues asparagine 361 to arginine 365. The chain crosses the membrane as a helical span at residues tryptophan 366–alanine 386. Residues histidine 387–alanine 397 lie on the Lumenal, vesicle side of the membrane. Residues glycine 398–valine 418 traverse the membrane as a helical segment. The Cytoplasmic portion of the chain corresponds to aspartate 419–histidine 422. The chain crosses the membrane as a helical span at residues threonine 423–isoleucine 443. The Lumenal, vesicle portion of the chain corresponds to glycine 444–glycine 448. Residues glycine 449–valine 470 form a helical membrane-spanning segment. Topologically, residues tyrosine 471–glutamate 525 are cytoplasmic. Residues alanine 503–glutamate 525 form a disordered region. Positions leucine 513–glutamate 525 are enriched in acidic residues.

Belongs to the major facilitator superfamily. Vesicular transporter family. As to expression, expressed primarily in neuroendocrine tissues. Highly expressed in chromaffin cells of the adrenal medulla (at protein level). Detected in peripheral sympathetic ganglia (at protein level). Found in some paracrine cells in stomach and duodenum (at protein level). Expressed in substantia nigra. Expressed in gastrointestinal tract.

It is found in the cytoplasmic vesicle. Its subcellular location is the secretory vesicle membrane. It localises to the secretory vesicle. The protein localises to the synaptic vesicle membrane. The protein resides in the endoplasmic reticulum membrane. It catalyses the reaction serotonin(in) + 2 H(+)(out) = serotonin(out) + 2 H(+)(in). The catalysed reaction is (R)-noradrenaline(in) + 2 H(+)(out) = (R)-noradrenaline(out) + 2 H(+)(in). It carries out the reaction dopamine(in) + 2 H(+)(out) = dopamine(out) + 2 H(+)(in). With respect to regulation, strongly inhibited by reserpine. Also inhibited to a lesser extent by ketanserin and fenfluramine. Not significantly inhibited by tetrabenazine. Its function is as follows. Electrogenic antiporter that exchanges one cationic monoamine with two intravesicular protons across the membrane of secretory and synaptic vesicles. Uses the electrochemical proton gradient established by the V-type proton-pump ATPase to accumulate high concentrations of monoamines inside the vesicles prior to their release via exocytosis. Transports catecholamines and indolamines with higher affinity for serotonin. Regulates the transvesicular monoaminergic gradient that determines the quantal size. Mediates presynaptic monoaminergic vesicle transport in the amygdala and prefrontal brain regions related with emotion processing in response to environmental stimuli. Unable to uptake serotonin. This chain is Chromaffin granule amine transporter (SLC18A1), found in Homo sapiens (Human).